The following is a 432-amino-acid chain: MCFSPVLEINMQSESNVTVRDDIEDIDTNMYQPLSYPLSFQVSLTGFLMLEIVLGLGSNLTVLVLYCMKSNLISSVSNIITMNLHVLDVIICVGCIPLTIVILLLSLERNTALICCFHEACVSFASVSTAINVFAITLDRYDISVKPANRILTMGRAVMLMTSIWIFSFFSFLIPFIEVNFFSLQSGNAWENKTLLCVSTSEYYTELGMYYHLLVQIPIFFFTVIVMLITYTKILQALNIRIGTRFSTGQKKKARKKKTISLTTHETTDMSQSSGGRNVVFGVRTSVSVIIALRRAVKRHRERRERQKRVFKMSLLIISTFLLCWTPISVLNTTILCLGPSDLLVKLRLCFLVMAYGTTIFHPLLYAFTRQKFQKVLKSKMKKRVVSIVEADPMPNNAVIHNSWIDPKRNKKVTYEDSEIREKCLVPQVVTD.

Topologically, residues 1 to 45 are cytoplasmic; it reads MCFSPVLEINMQSESNVTVRDDIEDIDTNMYQPLSYPLSFQVSLT. Residues 46–66 traverse the membrane as a helical segment; the sequence is GFLMLEIVLGLGSNLTVLVLY. The Extracellular portion of the chain corresponds to 67–85; that stretch reads CMKSNLISSVSNIITMNLH. The chain crosses the membrane as a helical span at residues 86–106; sequence VLDVIICVGCIPLTIVILLLS. At 107-115 the chain is on the cytoplasmic side; sequence LERNTALIC. A helical transmembrane segment spans residues 116–136; that stretch reads CFHEACVSFASVSTAINVFAI. Topologically, residues 137 to 156 are extracellular; that stretch reads TLDRYDISVKPANRILTMGR. A helical membrane pass occupies residues 157-177; sequence AVMLMTSIWIFSFFSFLIPFI. The Cytoplasmic segment spans residues 178–208; the sequence is EVNFFSLQSGNAWENKTLLCVSTSEYYTELG. The chain crosses the membrane as a helical span at residues 209–229; that stretch reads MYYHLLVQIPIFFFTVIVMLI. Residues 230–314 are Extracellular-facing; that stretch reads TYTKILQALN…ERQKRVFKMS (85 aa). Residues 315-335 form a helical membrane-spanning segment; it reads LLIISTFLLCWTPISVLNTTI. The Cytoplasmic segment spans residues 336–348; the sequence is LCLGPSDLLVKLR. The chain crosses the membrane as a helical span at residues 349–369; that stretch reads LCFLVMAYGTTIFHPLLYAFT. At 370 to 432 the chain is on the extracellular side; it reads RQKFQKVLKS…KCLVPQVVTD (63 aa).

This sequence belongs to the G-protein coupled receptor 1 family. Abundant levels detected in the brain. High expression in the heart (at protein level). No detectable expression in other peripheral tissues.

Its subcellular location is the cell membrane. Functionally, orphan G-protein coupled receptor. Seems to act through a G(i)/G(o) mediated pathway. May be involved in ciliogenesis. This is G-protein coupled receptor 22 from Rattus norvegicus (Rat).